Consider the following 2059-residue polypeptide: Large tegument protein deneddylase (2059 aa).

Residues 1-230 form a deubiquitination activity region; it reads MRIIAGSTNQ…PDIALSLNDF (230 aa). Positions 3–220 constitute a Peptidase C76 domain; sequence IIAGSTNQND…TILILKTYKD (218 aa). Residues Cys23, Asp155, and His157 contribute to the active site. A disordered region spans residues 245 to 272; the sequence is TNTLISKQSPSKRKQEKTSLNSNSLEKK. Position 278 (Ser278) is a region of interest, interaction with inner tegument protein.

The protein belongs to the herpesviridae large tegument protein family. In terms of assembly, interacts with host CUL1 and CUL4A; these interactions inhibit the E3 ligase activity of cullins. Interacts with inner tegument protein. Interacts with capsid vertex specific component CVC2. Interacts with the major capsid protein/MCP.

The protein resides in the virion tegument. Its subcellular location is the host cytoplasm. The protein localises to the host nucleus. It carries out the reaction Thiol-dependent hydrolysis of ester, thioester, amide, peptide and isopeptide bonds formed by the C-terminal Gly of ubiquitin (a 76-residue protein attached to proteins as an intracellular targeting signal).. Functionally, large tegument protein that plays multiple roles in the viral cycle. During viral entry, remains associated with the capsid while most of the tegument is detached and participates in the capsid transport toward the host nucleus. Plays a role in the routing of the capsid at the nuclear pore complex and subsequent uncoating. Within the host nucleus, acts as a deneddylase and promotes the degradation of nuclear CRLs (cullin-RING ubiquitin ligases) and thereby stabilizes nuclear CRL substrates, while cytoplasmic CRLs remain unaffected. These modifications prevent host cell cycle S-phase progression and create a favorable environment allowing efficient viral genome replication. Participates later in the secondary envelopment of capsids. Indeed, plays a linker role for the association of the outer viral tegument to the capsids together with the inner tegument protein. The protein is Large tegument protein deneddylase (U31) of Human herpesvirus 7 (strain JI) (HHV-7).